A 249-amino-acid chain; its full sequence is Polyhedrin (249 aa).

The protein belongs to the polyhedrin family.

In terms of biological role, major component of the virus occlusion bodies, which are large proteinaceous structures (polyhedra), that protect the virus from the outside environment for extended periods until they are ingested by insect larvae. This is Polyhedrin (PH) from Lepidoptera (butterflies and moths).